Consider the following 892-residue polypeptide: Alanine--tRNA ligase (892 aa).

Zn(2+) is bound by residues His-593, His-597, Cys-694, and His-698.

Belongs to the class-II aminoacyl-tRNA synthetase family. Requires Zn(2+) as cofactor.

It is found in the cytoplasm. The enzyme catalyses tRNA(Ala) + L-alanine + ATP = L-alanyl-tRNA(Ala) + AMP + diphosphate. Catalyzes the attachment of alanine to tRNA(Ala) in a two-step reaction: alanine is first activated by ATP to form Ala-AMP and then transferred to the acceptor end of tRNA(Ala). Also edits incorrectly charged Ser-tRNA(Ala) and Gly-tRNA(Ala) via its editing domain. The chain is Alanine--tRNA ligase from Helicobacter hepaticus (strain ATCC 51449 / 3B1).